The following is a 332-amino-acid chain: DNA-directed RNA polymerase subunit alpha (332 aa).

The tract at residues 1–244 is alpha N-terminal domain (alpha-NTD); it reads MKKHAKVYYS…AHLNLLADVE (244 aa). Positions 259–332 are alpha C-terminal domain (alpha-CTD); the sequence is IKEEPIRRFS…NYKNENKGEN (74 aa).

Belongs to the RNA polymerase alpha chain family. In terms of assembly, homodimer. The RNAP catalytic core consists of 2 alpha, 1 beta, 1 beta' and 1 omega subunit. When a sigma factor is associated with the core the holoenzyme is formed, which can initiate transcription.

The enzyme catalyses RNA(n) + a ribonucleoside 5'-triphosphate = RNA(n+1) + diphosphate. Its function is as follows. DNA-dependent RNA polymerase catalyzes the transcription of DNA into RNA using the four ribonucleoside triphosphates as substrates. The sequence is that of DNA-directed RNA polymerase subunit alpha from Mesomycoplasma hyopneumoniae (strain 232) (Mycoplasma hyopneumoniae).